We begin with the raw amino-acid sequence, 374 residues long: Zinc finger CCCH domain-containing protein 15 homolog (374 aa).

The tract at residues 1–20 (MPPKQQGPSKKSEQKRKEKV) is disordered. Basic and acidic residues predominate over residues 10–20 (KKSEQKRKEKV). 2 consecutive C3H1-type zinc fingers follow at residues 90 to 117 (DPKS…HDLA) and 166 to 199 (VCKY…HCLP).

The protein belongs to the ZC3H15/TMA46 family.

The polypeptide is Zinc finger CCCH domain-containing protein 15 homolog (Caenorhabditis elegans).